Here is a 424-residue protein sequence, read N- to C-terminus: Magnesium-chelatase subunit ChlI-1, chloroplastic (424 aa).

The transit peptide at 1 to 60 (MASLLGTSSSAIWASPSLSSPSSKPSSSPICFRPGKLFGSKLNAGIQIRPKKNRSRYHVS) directs the protein to the chloroplast. V61 carries the N-acetylvaline modification. 2 cysteine pairs are disulfide-bonded: C102–C193 and C354–C396. 119–126 (GDRGTGKS) lines the ATP pocket. S355 is modified (phosphoserine).

The protein belongs to the Mg-chelatase subunits D/I family. In terms of assembly, the magnesium chelatase complex is a heterotrimer consisting of subunits CHLI, CHLD and CHLH. Interacts with CHLH and CHLD.

The protein resides in the plastid. It localises to the chloroplast. The enzyme catalyses protoporphyrin IX + Mg(2+) + ATP + H2O = Mg-protoporphyrin IX + ADP + phosphate + 3 H(+). It participates in porphyrin-containing compound metabolism; chlorophyll biosynthesis. Redox regulation; active in reducing conditions, inactive in oxidizing conditions. Thioredoxins f and m mediate the reversible reductive activation of oxidized CHLI1. Its function is as follows. Involved in chlorophyll biosynthesis. Catalyzes the insertion of magnesium ion into protoporphyrin IX to yield Mg-protoporphyrin IX. The magnesium-chelatase is a complex of three subunits, CHLI, CHLD and CHLH. The reaction takes place in two steps, with an ATP-dependent activation followed by an ATP-dependent chelation step. Possesses high affinity for ATP and may play a major role in chlorophyll biosynthesis. Does not bind abscisic acid (ABA), but is a positive regulator of ABA signaling. May be involved in ABA signaling in the control of stomatal aperture, but does not seem to have an effect on ABA-induced gene expression. The chain is Magnesium-chelatase subunit ChlI-1, chloroplastic (CHLI1) from Arabidopsis thaliana (Mouse-ear cress).